A 192-amino-acid chain; its full sequence is A-type ATP synthase subunit E (192 aa).

Belongs to the V-ATPase E subunit family. As to quaternary structure, has multiple subunits with at least A(3), B(3), C, D, E, F, H, I and proteolipid K(x).

Its subcellular location is the cell membrane. In terms of biological role, component of the A-type ATP synthase that produces ATP from ADP in the presence of a proton gradient across the membrane. The polypeptide is A-type ATP synthase subunit E (Metallosphaera sedula (strain ATCC 51363 / DSM 5348 / JCM 9185 / NBRC 15509 / TH2)).